A 196-amino-acid chain; its full sequence is Transmembrane protein 52 (196 aa).

An N-terminal signal peptide occupies residues 1-28 (MAPGPSATQGILLLLPLLPLSQVTLGSA). Residues 47–67 (LWHVGLILLAILLMLLCGVTA) form a helical membrane-spanning segment. The interval 162–196 (EEVAAPSEKTNSLPEALEPETTGGPQEPGPSAQRP) is disordered.

It is found in the membrane. This is Transmembrane protein 52 (Tmem52) from Mus musculus (Mouse).